Here is a 145-residue protein sequence, read N- to C-terminus: Immunoglobulin iota chain (145 aa).

An N-terminal signal peptide occupies residues 1-19 (MSWAPVLLMLFVYCTGCGP). A framework-1 region spans residues 20-41 (QPVLHQPPAMSSALGTTIRLTC). An Ig-like V-type domain is found at 20 to 132 (QPVLHQPPAM…EKEEREREWE (113 aa)). The cysteines at positions 41 and 115 are disulfide-linked. The complementarity-determining-1 stretch occupies residues 42–56 (TLRNDHDIGVYSVYW). Residues 57 to 70 (YQQRPGHPPRFLLR) form a framework-2 region. A complementarity-determining-2 region spans residues 71 to 81 (YFSQSDKSQGP). The segment at 82–115 (QVPPRFSGSKDVARNRGYLSISELQPEDEAMYYC) is framework-3. Residues 121–130 (SSEKEERERE) are compositionally biased toward basic and acidic residues. Positions 121 to 145 (SSEKEEREREWEEEMEPTAARTRVP) are disordered.

This sequence belongs to the immunoglobulin superfamily. Interacts with IGLL1. Interacts with SYNV1/HRD1 (via N-terminus); this interaction leads to increased VPREB1 ubiquitination and degradation in pre-B cells, possibly through a lysosomal, not proteasomal, pathway. As to expression, only expressed by pre-B-cells.

It localises to the endoplasmic reticulum. Its function is as follows. Associates with the Ig-mu chain to form a molecular complex that is expressed on the surface of pre-B-cells. This complex presumably regulates Ig gene rearrangements in the early steps of B-cell differentiation. This chain is Immunoglobulin iota chain (VPREB1), found in Homo sapiens (Human).